A 299-amino-acid chain; its full sequence is Protease HtpX homolog (299 aa).

2 helical membrane passes run Trp14–Leu34 and Gly39–Phe59. His143 contacts Zn(2+). The active site involves Glu144. Residue His147 participates in Zn(2+) binding. A run of 2 helical transmembrane segments spans residues Ile153–Ala173 and Ile198–Val218. Glu227 contributes to the Zn(2+) binding site.

Belongs to the peptidase M48B family. Requires Zn(2+) as cofactor.

The protein localises to the cell membrane. The protein is Protease HtpX homolog of Streptococcus thermophilus (strain ATCC BAA-491 / LMD-9).